A 463-amino-acid polypeptide reads, in one-letter code: Gamma-aminobutyric acid receptor subunit alpha-5 (463 aa).

An N-terminal signal peptide occupies residues methionine 1–serine 25. Over serine 26 to phenylalanine 260 the chain is Extracellular. Asparagine 45 carries N-linked (GlcNAc...) asparagine glycosylation. Residue arginine 101 coordinates 4-aminobutanoate. Asparagine 145 is a glycosylation site (N-linked (GlcNAc...) asparagine). Threonine 164 provides a ligand contact to 4-aminobutanoate. An intrachain disulfide couples cysteine 173 to cysteine 187. Residues asparagine 207 and asparagine 236 are each glycosylated (N-linked (GlcNAc...) asparagine). 3 helical membrane passes run valine 261 to leucine 281, proline 287 to arginine 308, and alanine 319 to threonine 340. Residues valine 341–lysine 428 lie on the Cytoplasmic side of the membrane. Lysine 355 is covalently cross-linked (Glycyl lysine isopeptide (Lys-Gly) (interchain with G-Cter in ubiquitin)). Positions proline 387–alanine 408 are disordered. The chain crosses the membrane as a helical span at residues methionine 429–tyrosine 449.

Belongs to the ligand-gated ion channel (TC 1.A.9) family. Gamma-aminobutyric acid receptor (TC 1.A.9.5) subfamily. GABRA5 sub-subfamily. In terms of assembly, heteropentamer, formed by a combination of alpha (GABRA1-6), beta (GABRB1-3), gamma (GABRG1-3), delta (GABRD), epsilon (GABRE), rho (GABRR1-3), pi (GABRP) and theta (GABRQ) chains, each subunit exhibiting distinct physiological and pharmacological properties. Expressed in brain, in hippocampal pyramidal neurons.

The protein localises to the postsynaptic cell membrane. It is found in the cell membrane. It carries out the reaction chloride(in) = chloride(out). Alpha subunit of the heteropentameric ligand-gated chloride channel gated by gamma-aminobutyric acid (GABA), a major inhibitory neurotransmitter in the brain. GABA-gated chloride channels, also named GABA(A) receptors (GABAAR), consist of five subunits arranged around a central pore and contain GABA active binding site(s) located at the alpha and beta subunit interface(s). When activated by GABA, GABAARs selectively allow the flow of chloride anions across the cell membrane down their electrochemical gradient. GABAARs containing alpha-5/GABRA5 are mainly extrasynaptic and contribute to the tonic GABAergic inhibition of the hippocampus. Extrasynaptic alpha-5-containing GABAARs in CA1 pyramidal neurons play a role in learning and memory processes. The protein is Gamma-aminobutyric acid receptor subunit alpha-5 of Mus musculus (Mouse).